We begin with the raw amino-acid sequence, 217 residues long: Probable transaldolase (217 aa).

The active-site Schiff-base intermediate with substrate is Lys83.

The protein belongs to the transaldolase family. Type 3B subfamily.

It is found in the cytoplasm. It carries out the reaction D-sedoheptulose 7-phosphate + D-glyceraldehyde 3-phosphate = D-erythrose 4-phosphate + beta-D-fructose 6-phosphate. It functions in the pathway carbohydrate degradation; pentose phosphate pathway; D-glyceraldehyde 3-phosphate and beta-D-fructose 6-phosphate from D-ribose 5-phosphate and D-xylulose 5-phosphate (non-oxidative stage): step 2/3. In terms of biological role, transaldolase is important for the balance of metabolites in the pentose-phosphate pathway. In Methanocaldococcus jannaschii (strain ATCC 43067 / DSM 2661 / JAL-1 / JCM 10045 / NBRC 100440) (Methanococcus jannaschii), this protein is Probable transaldolase (tal).